Consider the following 48-residue polypeptide: Large ribosomal subunit protein eL40 (48 aa).

It belongs to the eukaryotic ribosomal protein eL40 family.

In Methanospirillum hungatei JF-1 (strain ATCC 27890 / DSM 864 / NBRC 100397 / JF-1), this protein is Large ribosomal subunit protein eL40.